We begin with the raw amino-acid sequence, 651 residues long: Threonine--tRNA ligase (651 aa).

The 61-residue stretch at 1–61 (MPTIQLPDGS…DKDVSLRIIT (61 aa)) folds into the TGS domain. The tract at residues 242–533 (DHRLLAKKMD…LLEESAGKLP (292 aa)) is catalytic. Zn(2+) is bound by residues Cys-333, His-384, and His-510. A disordered region spans residues 631–651 (ISQRSRKSPAPSPLFPVGGES).

It belongs to the class-II aminoacyl-tRNA synthetase family. As to quaternary structure, homodimer. Zn(2+) serves as cofactor.

Its subcellular location is the cytoplasm. The catalysed reaction is tRNA(Thr) + L-threonine + ATP = L-threonyl-tRNA(Thr) + AMP + diphosphate + H(+). Functionally, catalyzes the attachment of threonine to tRNA(Thr) in a two-step reaction: L-threonine is first activated by ATP to form Thr-AMP and then transferred to the acceptor end of tRNA(Thr). Also edits incorrectly charged L-seryl-tRNA(Thr). This Coxiella burnetii (strain RSA 493 / Nine Mile phase I) protein is Threonine--tRNA ligase.